A 316-amino-acid polypeptide reads, in one-letter code: MEIVLANPRGFCAGVDRAIAIVNRALECFNPPIYVRHEVVHNKFVVDDLRQRGAVFVDELDQVPDDSIVIFSAHGVSKAVQQEAERRGLKVFDATCPLVTKVHIEVTKYAREGTEAILIGHEGHPEVEGTMGQYDKLKGGDIYLVEDEADVAALEVRHPEKLAFVTQTTLSIDDTAKVIDALRAKFPNIQGPRKDDICYATQNRQDAVRDLAEKCDVVLVVGSPNSSNSNRLRELAERMGKAAYLVDNADQLEQSWFNDTCKIGVTAGASAPEILIKQVIQRLQDWGAQAPKELEGREENITFSLPKELRIHVTQA.

Residue Cys-12 coordinates [4Fe-4S] cluster. Residues His-41 and His-74 each contribute to the (2E)-4-hydroxy-3-methylbut-2-enyl diphosphate site. Positions 41 and 74 each coordinate dimethylallyl diphosphate. Isopentenyl diphosphate contacts are provided by His-41 and His-74. Position 96 (Cys-96) interacts with [4Fe-4S] cluster. His-124 contributes to the (2E)-4-hydroxy-3-methylbut-2-enyl diphosphate binding site. Dimethylallyl diphosphate is bound at residue His-124. His-124 contacts isopentenyl diphosphate. Catalysis depends on Glu-126, which acts as the Proton donor. Thr-168 serves as a coordination point for (2E)-4-hydroxy-3-methylbut-2-enyl diphosphate. Cys-198 lines the [4Fe-4S] cluster pocket. Positions 226, 227, 228, and 270 each coordinate (2E)-4-hydroxy-3-methylbut-2-enyl diphosphate. Dimethylallyl diphosphate-binding residues include Ser-226, Ser-227, Asn-228, and Ser-270. Isopentenyl diphosphate contacts are provided by Ser-226, Ser-227, Asn-228, and Ser-270.

It belongs to the IspH family. Requires [4Fe-4S] cluster as cofactor.

The catalysed reaction is isopentenyl diphosphate + 2 oxidized [2Fe-2S]-[ferredoxin] + H2O = (2E)-4-hydroxy-3-methylbut-2-enyl diphosphate + 2 reduced [2Fe-2S]-[ferredoxin] + 2 H(+). It carries out the reaction dimethylallyl diphosphate + 2 oxidized [2Fe-2S]-[ferredoxin] + H2O = (2E)-4-hydroxy-3-methylbut-2-enyl diphosphate + 2 reduced [2Fe-2S]-[ferredoxin] + 2 H(+). It participates in isoprenoid biosynthesis; dimethylallyl diphosphate biosynthesis; dimethylallyl diphosphate from (2E)-4-hydroxy-3-methylbutenyl diphosphate: step 1/1. Its pathway is isoprenoid biosynthesis; isopentenyl diphosphate biosynthesis via DXP pathway; isopentenyl diphosphate from 1-deoxy-D-xylulose 5-phosphate: step 6/6. In terms of biological role, catalyzes the conversion of 1-hydroxy-2-methyl-2-(E)-butenyl 4-diphosphate (HMBPP) into a mixture of isopentenyl diphosphate (IPP) and dimethylallyl diphosphate (DMAPP). Acts in the terminal step of the DOXP/MEP pathway for isoprenoid precursor biosynthesis. This is 4-hydroxy-3-methylbut-2-enyl diphosphate reductase from Acinetobacter baumannii (strain AB307-0294).